Consider the following 364-residue polypeptide: Aminomethyltransferase (364 aa).

This sequence belongs to the GcvT family. The glycine cleavage system is composed of four proteins: P, T, L and H.

It carries out the reaction N(6)-[(R)-S(8)-aminomethyldihydrolipoyl]-L-lysyl-[protein] + (6S)-5,6,7,8-tetrahydrofolate = N(6)-[(R)-dihydrolipoyl]-L-lysyl-[protein] + (6R)-5,10-methylene-5,6,7,8-tetrahydrofolate + NH4(+). Functionally, the glycine cleavage system catalyzes the degradation of glycine. The protein is Aminomethyltransferase of Shigella dysenteriae serotype 1 (strain Sd197).